The following is a 367-amino-acid chain: Queuine tRNA-ribosyltransferase (367 aa).

The active-site Proton acceptor is aspartate 89. Residues 89 to 93 (DSGGF), aspartate 143, glutamine 187, and glycine 214 each bind substrate. The segment at 245 to 251 (GVGTPAD) is RNA binding. The Nucleophile role is filled by aspartate 264. Positions 269-273 (TRNAR) are RNA binding; important for wobble base 34 recognition. The Zn(2+) site is built by cysteine 302, cysteine 304, cysteine 307, and histidine 333.

This sequence belongs to the queuine tRNA-ribosyltransferase family. In terms of assembly, homodimer. Within each dimer, one monomer is responsible for RNA recognition and catalysis, while the other monomer binds to the replacement base PreQ1. Requires Zn(2+) as cofactor.

It catalyses the reaction 7-aminomethyl-7-carbaguanine + guanosine(34) in tRNA = 7-aminomethyl-7-carbaguanosine(34) in tRNA + guanine. The protein operates within tRNA modification; tRNA-queuosine biosynthesis. Its function is as follows. Catalyzes the base-exchange of a guanine (G) residue with the queuine precursor 7-aminomethyl-7-deazaguanine (PreQ1) at position 34 (anticodon wobble position) in tRNAs with GU(N) anticodons (tRNA-Asp, -Asn, -His and -Tyr). Catalysis occurs through a double-displacement mechanism. The nucleophile active site attacks the C1' of nucleotide 34 to detach the guanine base from the RNA, forming a covalent enzyme-RNA intermediate. The proton acceptor active site deprotonates the incoming PreQ1, allowing a nucleophilic attack on the C1' of the ribose to form the product. After dissociation, two additional enzymatic reactions on the tRNA convert PreQ1 to queuine (Q), resulting in the hypermodified nucleoside queuosine (7-(((4,5-cis-dihydroxy-2-cyclopenten-1-yl)amino)methyl)-7-deazaguanosine). This is Queuine tRNA-ribosyltransferase from Nitrosospira multiformis (strain ATCC 25196 / NCIMB 11849 / C 71).